The primary structure comprises 778 residues: Phenylalanine--tRNA ligase beta subunit (778 aa).

In terms of domain architecture, tRNA-binding spans 39-150 (YEVPQKIVFG…GKYKIGEEVS (112 aa)). A B5 domain is found at 391–467 (HEDKIISLNK…RLVGIDNIPS (77 aa)). Positions 445, 451, 454, and 455 each coordinate Mg(2+). The 93-residue stretch at 686–778 (SKYQASFRDL…LKNQLGVGIR (93 aa)) folds into the FDX-ACB domain.

The protein belongs to the phenylalanyl-tRNA synthetase beta subunit family. Type 1 subfamily. In terms of assembly, tetramer of two alpha and two beta subunits. Requires Mg(2+) as cofactor.

The protein resides in the cytoplasm. It carries out the reaction tRNA(Phe) + L-phenylalanine + ATP = L-phenylalanyl-tRNA(Phe) + AMP + diphosphate + H(+). This chain is Phenylalanine--tRNA ligase beta subunit, found in Sulfurimonas denitrificans (strain ATCC 33889 / DSM 1251) (Thiomicrospira denitrificans (strain ATCC 33889 / DSM 1251)).